Here is a 662-residue protein sequence, read N- to C-terminus: A-kinase anchor protein 10, mitochondrial (662 aa).

The transit peptide at 1–28 (MRGAGPSPRHSPRALRPDPGPAMSFFRR) directs the protein to the mitochondrion. 3 disordered regions span residues 1–55 (MRGA…SPQK), 178–205 (KQSSLAEPVSPSKRHETPASSVTEALDR), and 242–280 (GHSARSLHREVARTGSHQIPTDSQDSSSRLAVGSRNSCS). A compositionally biased stretch (basic and acidic residues) spans 32-43 (GKEQEKTLDVKS). Serine 52 and serine 189 each carry phosphoserine. RGS domains lie at 125–369 (TLEQ…CKYQ) and 379–505 (YLAD…YKYL). A compositionally biased stretch (polar residues) spans 256–280 (GSHQIPTDSQDSSSRLAVGSRNSCS). A Phosphoserine modification is found at serine 281. The tract at residues 634 to 647 (LAWKIAKMIVSDVM) is PKA-RII subunit binding.

Highly expressed in testis, kidney and lung, followed by brain, skeletal muscle, liver, spleen and heart. Also expressed in brown adipose tissue and pancreas.

It is found in the mitochondrion. The protein localises to the membrane. It localises to the cytoplasm. Differentially targeted protein that binds to type I and II regulatory subunits of protein kinase A and anchors them to the mitochondria or the plasma membrane. Although the physiological relevance between PKA and AKAPS with mitochondria is not fully understood, one idea is that BAD, a proapoptotic member, is phosphorylated and inactivated by mitochondria-anchored PKA. It cannot be excluded too that it may facilitate PKA as well as G protein signal transduction, by acting as an adapter for assembling multiprotein complexes. With its RGS domain, it could lead to the interaction to G-alpha proteins, providing a link between the signaling machinery and the downstream kinase. The polypeptide is A-kinase anchor protein 10, mitochondrial (Akap10) (Mus musculus (Mouse)).